The chain runs to 301 residues: XIAP-associated factor 1 (301 aa).

The TRAF-type zinc finger occupies leucine 22–glutamate 99. The tract at residues isoleucine 189–aspartate 257 is disordered. Polar residues predominate over residues serine 193–threonine 205.

Interacts with BIRC4; the interaction is not detected in. Interacts with BIRC1, BIRC2, BIRC3, BIRC7 and BIRC8. Part of an complex consisting of BIRC4, XAF1 and BIRC5; the complex formation requires IFN-beta stimulation. Interacts with RNF114, the interaction increases XAF1 stability and proapoptotic effects, and may regulate IFN signaling. In terms of tissue distribution, widely expressed. Expression is frequently down-regulated in cancer cell lines. Isoform 5 is widely expressed. Expressed in placenta (at protein level).

The protein resides in the cytoplasm. It is found in the nucleus. It localises to the mitochondrion. Seems to function as a negative regulator of members of the IAP (inhibitor of apoptosis protein) family. Inhibits anti-caspase activity of BIRC4. Induces cleavage and inactivation of BIRC4 independent of caspase activation. Mediates TNF-alpha-induced apoptosis and is involved in apoptosis in trophoblast cells. May inhibit BIRC4 indirectly by activating the mitochondrial apoptosis pathway. After translocation to mitochondria, promotes translocation of BAX to mitochondria and cytochrome c release from mitochondria. Seems to promote the redistribution of BIRC4 from the cytoplasm to the nucleus, probably independent of BIRC4 inactivation which seems to occur in the cytoplasm. The BIRC4-XAF1 complex mediates down-regulation of BIRC5/survivin; the process requires the E3 ligase activity of BIRC4. Seems to be involved in cellular sensitivity to the proapoptotic actions of TRAIL. May be a tumor suppressor by mediating apoptosis resistance of cancer cells. In Homo sapiens (Human), this protein is XIAP-associated factor 1 (XAF1).